We begin with the raw amino-acid sequence, 522 residues long: 2-isopropylmalate synthase (522 aa).

A Pyruvate carboxyltransferase domain is found at 5 to 267; the sequence is VIIFDTTLRD…YTNINAREIH (263 aa). The Mn(2+) site is built by Asp-14, His-202, His-204, and Asn-238. Residues 392–522 form a regulatory domain region; the sequence is VMEQLVVQSD…MQQTRELGGV (131 aa).

Belongs to the alpha-IPM synthase/homocitrate synthase family. LeuA type 1 subfamily. Homodimer. Mn(2+) serves as cofactor.

It localises to the cytoplasm. The catalysed reaction is 3-methyl-2-oxobutanoate + acetyl-CoA + H2O = (2S)-2-isopropylmalate + CoA + H(+). The protein operates within amino-acid biosynthesis; L-leucine biosynthesis; L-leucine from 3-methyl-2-oxobutanoate: step 1/4. Catalyzes the condensation of the acetyl group of acetyl-CoA with 3-methyl-2-oxobutanoate (2-ketoisovalerate) to form 3-carboxy-3-hydroxy-4-methylpentanoate (2-isopropylmalate). In Shewanella amazonensis (strain ATCC BAA-1098 / SB2B), this protein is 2-isopropylmalate synthase.